The chain runs to 463 residues: ATP-dependent protease ATPase subunit HslU (463 aa).

ATP is bound by residues isoleucine 19, 61–66 (GVGKTE), aspartate 277, glutamate 341, and arginine 413.

It belongs to the ClpX chaperone family. HslU subfamily. As to quaternary structure, a double ring-shaped homohexamer of HslV is capped on each side by a ring-shaped HslU homohexamer. The assembly of the HslU/HslV complex is dependent on binding of ATP.

The protein resides in the cytoplasm. Its function is as follows. ATPase subunit of a proteasome-like degradation complex; this subunit has chaperone activity. The binding of ATP and its subsequent hydrolysis by HslU are essential for unfolding of protein substrates subsequently hydrolyzed by HslV. HslU recognizes the N-terminal part of its protein substrates and unfolds these before they are guided to HslV for hydrolysis. The protein is ATP-dependent protease ATPase subunit HslU of Bacillus anthracis (strain A0248).